We begin with the raw amino-acid sequence, 353 residues long: Probable cytochrome c oxidase subunit 2 (353 aa).

An N-terminal signal peptide occupies residues 1–42; the sequence is MTARELVCSQRVGQGLSRRLRPLVLAVTLGVLVVTLSGCSWS. 2 helical membrane passes run 63 to 83 and 110 to 130; these read LWIG…GLIF and LVLT…TVIV. Cu cation is bound by residues histidine 246, cysteine 287, cysteine 291, and histidine 295.

It belongs to the cytochrome c oxidase subunit 2 family. It depends on Cu cation as a cofactor. Heme is required as a cofactor.

Its subcellular location is the cell membrane. The enzyme catalyses 4 Fe(II)-[cytochrome c] + O2 + 8 H(+)(in) = 4 Fe(III)-[cytochrome c] + 2 H2O + 4 H(+)(out). Subunits I and II form the functional core of the enzyme complex. Electrons originating in cytochrome c are transferred via heme a and Cu(A) to the binuclear center formed by heme a3 and Cu(B). This chain is Probable cytochrome c oxidase subunit 2 (ctaC), found in Mycobacterium leprae (strain TN).